The following is an 84-amino-acid chain: LSCASCENAACPAIGLPCKPSEYVYTPCGCCPQCPLELGQPCGSFTQRCQFDLWCLRRKGNKIEAYKYVPWHLDFKGVCARVDV.

An IGFBP N-terminal domain is found at 1 to 82 (LSCASCENAA…LDFKGVCARV (82 aa)). 6 disulfide bridges follow: Cys3/Cys28, Cys6/Cys30, Cys11/Cys31, Cys18/Cys34, Cys42/Cys55, and Cys49/Cys79.

As to expression, shell.

Binds human IGF1 and IGF2 and bovine insulin. This is Perlustrin from Haliotis laevigata (Smooth Australian abalone).